Consider the following 204-residue polypeptide: V-set and transmembrane domain-containing protein 2-like protein (204 aa).

Residues 1 to 24 (MGAPLAVALGALHYLALFLQLGGA) form the signal peptide. Residues 41–158 (ALFTETPHDM…DGKARHHKVK (118 aa)) form the Ig-like domain. Cys62 and Cys142 are joined by a disulfide. The interval 168 to 204 (NSVLHLPEAPPAAPAPPPPKPGKELRKRSVDQEACSL) is disordered. The segment covering 175–187 (EAPPAAPAPPPPK) has biased composition (pro residues). Residues 188 to 198 (PGKELRKRSVD) show a composition bias toward basic and acidic residues.

The protein is V-set and transmembrane domain-containing protein 2-like protein (VSTM2L) of Homo sapiens (Human).